Consider the following 207-residue polypeptide: Alpha-1-acid glycoprotein 8 (207 aa).

The signal sequence occupies residues 1–18 (MALHTVLIMLSLLPMLEA). N-linked (GlcNAc...) asparagine glycosylation is found at Asn25, Asn34, Asn76, Asn94, and Asn104. Cys91 and Cys184 are oxidised to a cystine.

Belongs to the calycin superfamily. Lipocalin family. Expressed by the liver and secreted in plasma.

It is found in the secreted. Functions as a transport protein in the blood stream. Binds various ligands in the interior of its beta-barrel domain. Appears to function in modulating the activity of the immune system during the acute-phase reaction. The polypeptide is Alpha-1-acid glycoprotein 8 (Orm8) (Mus caroli (Ryukyu mouse)).